A 410-amino-acid polypeptide reads, in one-letter code: Subtilisin-like protease CPC735_003880 (410 aa).

Residues 1–17 form the signal peptide; sequence MKLLKSSLLLLLPFVTA. The propeptide occupies 18-118; it reads NPIPSEDKDI…VTPDRKVYLA (101 aa). Residues 31-118 enclose the Inhibitor I9 domain; it reads RYIVTLKDGI…VTPDRKVYLA (88 aa). In terms of domain architecture, Peptidase S8 spans 127–410; sequence GYNLGHMSSK…IQEMNETVIA (284 aa). Catalysis depends on Asp159, which acts as the Charge relay system. The N-linked (GlcNAc...) asparagine glycan is linked to Asn182. His191 acts as the Charge relay system in catalysis. N-linked (GlcNAc...) asparagine glycosylation is found at Asn238, Asn251, and Asn338. Ser347 functions as the Charge relay system in the catalytic mechanism. A glycan (N-linked (GlcNAc...) asparagine) is linked at Asn405.

The protein belongs to the peptidase S8 family.

The protein localises to the secreted. Secreted subtilisin-like serine protease with keratinolytic activity that contributes to pathogenicity. The chain is Subtilisin-like protease CPC735_003880 from Coccidioides posadasii (strain C735) (Valley fever fungus).